The primary structure comprises 355 residues: Protein RecA (355 aa).

ATP is bound at residue 67–74 (GPESSGKT).

It belongs to the RecA family.

It localises to the cytoplasm. In terms of biological role, can catalyze the hydrolysis of ATP in the presence of single-stranded DNA, the ATP-dependent uptake of single-stranded DNA by duplex DNA, and the ATP-dependent hybridization of homologous single-stranded DNAs. It interacts with LexA causing its activation and leading to its autocatalytic cleavage. The sequence is that of Protein RecA from Proteus mirabilis (strain HI4320).